Reading from the N-terminus, the 351-residue chain is S-adenosylmethionine:tRNA ribosyltransferase-isomerase (351 aa).

It belongs to the QueA family. Monomer.

It localises to the cytoplasm. It carries out the reaction 7-aminomethyl-7-carbaguanosine(34) in tRNA + S-adenosyl-L-methionine = epoxyqueuosine(34) in tRNA + adenine + L-methionine + 2 H(+). Its pathway is tRNA modification; tRNA-queuosine biosynthesis. Transfers and isomerizes the ribose moiety from AdoMet to the 7-aminomethyl group of 7-deazaguanine (preQ1-tRNA) to give epoxyqueuosine (oQ-tRNA). In Acinetobacter baumannii (strain SDF), this protein is S-adenosylmethionine:tRNA ribosyltransferase-isomerase.